The following is a 165-amino-acid chain: MQSFLSVWLVKHGIIHRSLGFDYQGIETLQIKPEDWHSVAVILYVYGYNYLRSQCAYDVAPGGLLASVYHLTRIEYGVTRIEYGAYQPEEVCIKVFASRKNSRIPSVFWIWKSADFQERESYDMLGISYDNHPRLKRILMPESWIGWPLRKDYVAPHFYEIQDAH.

It belongs to the complex I 30 kDa subunit family. As to quaternary structure, NDH is composed of at least 16 different subunits, 5 of which are encoded in the nucleus.

It localises to the plastid. The protein resides in the chloroplast thylakoid membrane. The catalysed reaction is a plastoquinone + NADH + (n+1) H(+)(in) = a plastoquinol + NAD(+) + n H(+)(out). It catalyses the reaction a plastoquinone + NADPH + (n+1) H(+)(in) = a plastoquinol + NADP(+) + n H(+)(out). NDH shuttles electrons from NAD(P)H:plastoquinone, via FMN and iron-sulfur (Fe-S) centers, to quinones in the photosynthetic chain and possibly in a chloroplast respiratory chain. The immediate electron acceptor for the enzyme in this species is believed to be plastoquinone. Couples the redox reaction to proton translocation, and thus conserves the redox energy in a proton gradient. This chain is NAD(P)H-quinone oxidoreductase subunit J, chloroplastic, found in Ipomoea purpurea (Common morning glory).